Here is a 206-residue protein sequence, read N- to C-terminus: MKLLLKYFPDLTEEQRKQFAALYELYIDWNSKINVISRKDIENLYEHHVLHSLGIARIIRFRAGSSVMDLGTGGGFPGIPLAILFPDTKFHLVDSIGKKVRVATEVANAIGLKNVTFRHARAEEEKQTFDFVVSRAVMPLADLIKIIRKNISPKQQNALPNGLICLKGGELEHEAMPFKHKTSMHNLNEDFDEEFFQTKKVVYVTI.

Residues Gly71, Phe76, 122–123, and Arg135 each bind S-adenosyl-L-methionine; that span reads AE.

This sequence belongs to the methyltransferase superfamily. RNA methyltransferase RsmG family.

Its subcellular location is the cytoplasm. Its function is as follows. Specifically methylates the N7 position of a guanine in 16S rRNA. The chain is Ribosomal RNA small subunit methyltransferase G from Bacteroides fragilis (strain ATCC 25285 / DSM 2151 / CCUG 4856 / JCM 11019 / LMG 10263 / NCTC 9343 / Onslow / VPI 2553 / EN-2).